The following is a 167-amino-acid chain: Putative C-type lectin-like domain family 1 (167 aa).

Residues 1–67 are Cytoplasmic-facing; it reads MVSNFFHVIQ…KYDCPFSGTS (67 aa). Residues 68-88 form a helical; Signal-anchor for type II membrane protein membrane-spanning segment; sequence FVVFSLFLICAMAGDVVYADI. Topologically, residues 89 to 167 are extracellular; sequence KTVRTSPLEL…DITAMVRFNI (79 aa). 3 N-linked (GlcNAc...) asparagine glycosylation sites follow: Asn109, Asn140, and Asn149. The region spanning 116–167 is the C-type lectin; atypical domain; that stretch reads SCPAKDWKVHKGKCYWIAETKKSWNKSQNDCAINNSYLMVIQDITAMVRFNI.

Expressed in spleen, lymph node, and tonsil. Lower expression in peripheral blood, bone marrow, and colon. No expression detected in thymus. Highly expressed in dendritic and B-cells.

It is found in the cell membrane. Its function is as follows. May function in mediating immune cell-cell interactions. May act as a T-cell costimulatory molecule, enhancing anti-CD3-induced proliferation. May play a role in the interaction of dendritic cells with T-cells and the cells of the adaptive immune response. The polypeptide is Putative C-type lectin-like domain family 1 (Homo sapiens (Human)).